We begin with the raw amino-acid sequence, 177 residues long: Keratin-associated protein 1-1 (177 aa).

This sequence belongs to the KRTAP type 1 family. In terms of assembly, interacts with hair keratins. As to expression, expressed in the middle/upper portions of the hair cortex, in the region termed the keratogenous zone.

Its function is as follows. In the hair cortex, hair keratin intermediate filaments are embedded in an interfilamentous matrix, consisting of hair keratin-associated proteins (KRTAP), which are essential for the formation of a rigid and resistant hair shaft through their extensive disulfide bond cross-linking with abundant cysteine residues of hair keratins. The matrix proteins include the high-sulfur and high-glycine-tyrosine keratins. The protein is Keratin-associated protein 1-1 (KRTAP1-1) of Homo sapiens (Human).